A 960-amino-acid polypeptide reads, in one-letter code: UPF0182 protein DSY1630 (960 aa).

The next 7 helical transmembrane spans lie at 7 to 27 (IMLV…GLFE), 50 to 70 (IIQI…LFSI), 105 to 125 (TLWL…VTGF), 169 to 189 (FGPL…AGVI), 212 to 232 (LALL…FDTF), 256 to 276 (ALKA…LAFF), and 285 to 305 (LPIL…PMVL). 2 disordered regions span residues 866–899 (SALA…QEDT) and 924–960 (TGDS…KTNP). The span at 881–897 (ETEETTEETEEPVDPQE) shows a compositional bias: acidic residues. Residues 931–944 (EGGKKADEDAHDVQ) show a composition bias toward basic and acidic residues. A compositionally biased stretch (polar residues) spans 950 to 960 (SVSSEQSKTNP).

It belongs to the UPF0182 family.

The protein resides in the cell membrane. The protein is UPF0182 protein DSY1630 of Desulfitobacterium hafniense (strain Y51).